The chain runs to 64 residues: Chromatin protein Cren7 (64 aa).

It belongs to the Cren7 family. In terms of assembly, monomer. Post-translationally, methylated at multiple sites, to varying extents.

The protein localises to the chromosome. The protein resides in the cytoplasm. Functionally, a chromatin protein, binds double-stranded DNA without sequence specificity. Constrains negative DNA supercoils. In Aeropyrum pernix (strain ATCC 700893 / DSM 11879 / JCM 9820 / NBRC 100138 / K1), this protein is Chromatin protein Cren7.